The chain runs to 308 residues: Ribosomal RNA small subunit methyltransferase H (308 aa).

S-adenosyl-L-methionine contacts are provided by residues G38–H40, D58, F82, D99, and Q106.

This sequence belongs to the methyltransferase superfamily. RsmH family.

The protein resides in the cytoplasm. The enzyme catalyses cytidine(1402) in 16S rRNA + S-adenosyl-L-methionine = N(4)-methylcytidine(1402) in 16S rRNA + S-adenosyl-L-homocysteine + H(+). Functionally, specifically methylates the N4 position of cytidine in position 1402 (C1402) of 16S rRNA. The polypeptide is Ribosomal RNA small subunit methyltransferase H (Acidovorax sp. (strain JS42)).